Reading from the N-terminus, the 819-residue chain is Deubiquitinase MYSM1 (819 aa).

Positions 1–12 are enriched in acidic residues; it reads MEAEEADVDVEG. The interval 1-29 is disordered; the sequence is MEAEEADVDVEGDVAAAAQPGNDESTASV. S107 bears the Phosphoserine mark. The SANT domain maps to 113 to 164; the sequence is SHSVKWTVEEKELFEQGLAKFGRRWTKIATLLKSRTVLQVKSYARQYFKNKV. Residue K184 forms a Glycyl lysine isopeptide (Lys-Gly) (interchain with G-Cter in SUMO2) linkage. Phosphoserine is present on S215. 3 disordered regions span residues 228-247, 260-279, and 318-347; these read ELTSQTSQNSGSHLTLDVPN, QEGPLAKSSGESLQNVKQGE, and LHRGEVREEAKHSPSPEPCERQDSSGNEML. A compositionally biased stretch (polar residues) spans 230–240; sequence TSQTSQNSGSH. T233 bears the Phosphothreonine mark. Residues 318–340 show a composition bias toward basic and acidic residues; that stretch reads LHRGEVREEAKHSPSPEPCERQD. S332 carries the phosphoserine modification. Residues 363 to 461 form the SWIRM domain; sequence LKPPEQEVEI…FGCEQAVYNR (99 aa). The 133-residue stretch at 568-700 folds into the MPN domain; sequence VKVAAEALLI…PLPYSQITCL (133 aa). Zn(2+) is bound by residues H647, H649, and D660. Positions 647–660 match the JAMM motif motif; sequence HSHPAFDPNPSLRD. Residues 765-769 carry the LXXLL motif motif; sequence LQKLL.

The protein belongs to the peptidase M67A family. MYSM1 subfamily. In terms of assembly, component of a large chromatin remodeling complex, at least composed of MYSM1, PCAF, RBM10 and KIF11/TRIP5. Binds histones.

Its subcellular location is the nucleus. It is found in the cytoplasm. Metalloprotease with deubiquitinase activity that plays important regulator roles in hematopoietic stem cell function, blood cell production and immune response. Participates in the normal programming of B-cell responses to antigen after the maturation process. Within the cytoplasm, plays critical roles in the repression of innate immunity and autoimmunity. Removes 'Lys-63'-linked polyubiquitins from TRAF3 and TRAF6 complexes. Attenuates NOD2-mediated inflammation and tissue injury by promoting 'Lys-63'-linked deubiquitination of RIPK2 component. Suppresses the CGAS-STING1 signaling pathway by cleaving STING1 'Lys-63'-linked ubiquitin chains. In the nucleus, acts as a hematopoietic transcription regulator derepressing a range of genes essential for normal stem cell differentiation including EBF1 and PAX5 in B-cells, ID2 in NK-cell progenitor or FLT3 in dendritic cell precursors. Deubiquitinates monoubiquitinated histone H2A, a specific tag for epigenetic transcriptional repression, leading to dissociation of histone H1 from the nucleosome. The chain is Deubiquitinase MYSM1 (Mysm1) from Mus musculus (Mouse).